An 834-amino-acid polypeptide reads, in one-letter code: Dual specificity calcium/calmodulin-dependent 3',5'-cyclic nucleotide phosphodiesterase 1 (834 aa).

The tract at residues 152–338 (HSHGRDDQQQ…DELSEVQPDA (187 aa)) is disordered. Residues 207 to 222 (THSGPTGPPSNTSSET) are compositionally biased toward low complexity. Residues 236-252 (TVRESVMEESPSKDPGD) show a composition bias toward basic and acidic residues. Residues 260–301 (STSTLTSQTTTSSSATAEPSAKAAESQAGSAGSSGSCSNPAA) show a composition bias toward low complexity. The span at 313-322 (WARSMSTNKT) shows a compositional bias: polar residues. The tract at residues 364-387 (EKPKFRSVAHAIRAGIFVDRMYRR) is calmodulin-binding. In terms of domain architecture, PDEase spans 392-786 (ALTAFPPDVV…RIWKEQAVKD (395 aa)). H469 acts as the Proton donor in catalysis. Positions 473, 509, 510, and 617 each coordinate Zn(2+). A Mg(2+)-binding site is contributed by D510. Disordered stretches follow at residues 720–744 (IVIP…AKTT) and 797–834 (EEAA…GAAA). A compositionally biased stretch (basic and acidic residues) spans 732–741 (DKPRDHRTEA). Residues 823 to 834 (EPAAEPADGAAA) are compositionally biased toward low complexity.

This sequence belongs to the cyclic nucleotide phosphodiesterase family. PDE1 subfamily. The cofactor is Zn(2+). It depends on Mg(2+) as a cofactor. In terms of tissue distribution, expressed in the head (at protein level). Expressed in Malpighian tubules. Expressed in neurons in the brain and ventral ganglia with male flies having higher levels of expression in the abdominal ganglia compared to female flies.

The catalysed reaction is a nucleoside 3',5'-cyclic phosphate + H2O = a nucleoside 5'-phosphate + H(+). The enzyme catalyses 3',5'-cyclic GMP + H2O = GMP + H(+). It catalyses the reaction 3',5'-cyclic AMP + H2O = AMP + H(+). Type I PDE are activated by the binding of calmodulin in the presence of Ca(2+). Inhibited by zaprinast and sildenafil. Functionally, cyclic nucleotide phosphodiesterase with a dual specificity for the second messengers cAMP and cGMP, which are key regulators of many important physiological processes. Required for male fertility and male mating behavior. This Drosophila melanogaster (Fruit fly) protein is Dual specificity calcium/calmodulin-dependent 3',5'-cyclic nucleotide phosphodiesterase 1.